A 245-amino-acid chain; its full sequence is MKNNTKIIETKCSMEQINVSPKYYDIISFGYFPNYFNINNSTNSIENQSNNIKEYKISILEDFQENDNQTNKLCTTITNNIKIIKKISKSKKLNSKSHIFKKRNFKSNCTSSNQNSNNVIATLILPKIDDNNNNNNNDQIENNSINCINNNNINNNINENNKFTWVYYHYDCNGKRKSIYDDNEMSELSTTPFPKNHICSKCSSSQRSVFKLNKFGKLDCSFCLNNNNNTTTTTTTTPQPNSDFN.

This is an uncharacterized protein from Dictyostelium discoideum (Social amoeba).